A 317-amino-acid chain; its full sequence is U5 small nuclear ribonucleoprotein TSSC4 (317 aa).

Acidic residues predominate over residues 1–19 (MAETEAGLEADEPTEDDTL). Positions 1–74 (MAETEAGLEA…PPTGTLTTAV (74 aa)) are disordered. The segment covering 20 to 37 (PSDTVSLSDSDSDLSLPS) has biased composition (low complexity). A phosphoserine mark is found at Ser-57, Ser-64, Ser-83, and Ser-92. Residues 74-101 (VQPFHLRGMSSTFSQRSHSIFDCLESAA) form a hom2; mediates interaction with the U5 snRNP complexes and required for spliceosomal tri-snRNP complex assembly region. Residues 101–152 (ARQAPCSAPQTSVSDNGSFRRPVTPPSQTPARGLSRVHGNTGPTRVLPVPDY) are disordered. Positions 108–117 (APQTSVSDNG) are enriched in polar residues. Thr-124 is subject to Phosphothreonine. The segment at 146–300 (VLPVPDYVSH…SKKRSRDHFR (155 aa)) is interaction with SNRNP200. The hom3; mediates interaction with the U5 snRNP complexes stretch occupies residues 147 to 183 (LPVPDYVSHPERWTKYSLEDVSEASEQSNRDAALAFL). The interval 198–238 (FNQDPSSCGEGRVVFTKPVRDSEARAERKRVLKKGVGSGAG) is hom4; necessary for interaction with the PRPF19 complex and required for spliceosomal tri-snRNP complex assembly. Residue Lys-214 is modified to N6-acetyllysine. Residues 216-317 (VRDSEARAER…GPGSERGPSV (102 aa)) form a disordered region. Over residues 240 to 250 (EAAVELAHLAG) the composition is skewed to low complexity.

It belongs to the TSSC4 family. As to quaternary structure, interacts in a RNA-independent manner with distinct U5 snRNP-containing complexes, the mono-U5 snRNP and the post-splicing U5 snRNP-PRPF19 complex. Interacts with SNRNP200; the interaction is direct, excludes recruitment of C9ORF78 and WBP4 to SNRNP200 and negatively regulates its RNA helicase activity. Interacts with PRPF8; the interaction is direct. Expressed in placenta. Widely expressed in embryo and newborn.

The protein localises to the nucleus. It localises to the cytoplasm. Protein associated with the U5 snRNP, during its maturation and its post-splicing recycling and which is required for spliceosomal tri-snRNP complex assembly in the nucleus. Has a molecular sequestering activity and transiently hinders SNRNP200 binding sites for constitutive splicing factors that intervene later during the assembly of the spliceosome and splicing. Together with its molecular sequestering activity, may also function as a molecular adapter and placeholder, coordinating the assembly of the U5 snRNP and its association with the U4/U6 di-snRNP. This Mus musculus (Mouse) protein is U5 small nuclear ribonucleoprotein TSSC4.